We begin with the raw amino-acid sequence, 383 residues long: Na(+)/H(+) antiporter NhaA (383 aa).

11 consecutive transmembrane segments (helical) span residues 21 to 41 (AAGV…NSIW), 56 to 76 (LTMR…LAGL), 94 to 114 (LLPG…YVAF), 123 to 143 (GWAI…ALAG), 152 to 172 (VFLT…IALF), 175 to 195 (GTLS…LLML), 202 to 222 (TLFP…KSGI), 258 to 278 (FVIL…GVTV), 287 to 307 (LGVG…AVSI), 326 to 346 (IGIA…AILA), and 355 to 375 (QIKL…YILL).

The protein belongs to the NhaA Na(+)/H(+) (TC 2.A.33) antiporter family.

It is found in the cell inner membrane. The catalysed reaction is Na(+)(in) + 2 H(+)(out) = Na(+)(out) + 2 H(+)(in). In terms of biological role, na(+)/H(+) antiporter that extrudes sodium in exchange for external protons. This is Na(+)/H(+) antiporter NhaA from Granulibacter bethesdensis (strain ATCC BAA-1260 / CGDNIH1).